Here is a 433-residue protein sequence, read N- to C-terminus: uncharacterized protein (433 aa).

Residues 1–59 (MGEEYEVEIGPVAHGGHCIARTSEGQVLFVRHALPGERVLARVTEGEEGARYLRADAVE) form the TRAM domain. The [4Fe-4S] cluster site is built by Cys-72, Cys-80, Cys-83, and Cys-168. 4 residues coordinate S-adenosyl-L-methionine: Gln-262, Tyr-291, Glu-315, and Asp-359. Cys-386 (nucleophile) is an active-site residue.

It belongs to the class I-like SAM-binding methyltransferase superfamily. RNA M5U methyltransferase family.

This is an uncharacterized protein from Streptomyces avermitilis (strain ATCC 31267 / DSM 46492 / JCM 5070 / NBRC 14893 / NCIMB 12804 / NRRL 8165 / MA-4680).